Here is a 485-residue protein sequence, read N- to C-terminus: Ribosomal protein uS12 methylthiotransferase RimO (485 aa).

The MTTase N-terminal domain occupies 37–147; the sequence is SRIGFVSLGC…VVEQVHEHLP (111 aa). Residues Cys46, Cys82, Cys111, Cys179, Cys183, and Cys186 each contribute to the [4Fe-4S] cluster site. Residues 165–402 form the Radical SAM core domain; it reads LTPRHYAYLK…MEVQGEISAA (238 aa). Residues 405–471 form the TRAM domain; sequence KARIGNEYQV…EHDVWAVLSE (67 aa).

The protein belongs to the methylthiotransferase family. RimO subfamily. It depends on [4Fe-4S] cluster as a cofactor.

The protein localises to the cytoplasm. The enzyme catalyses L-aspartate(89)-[ribosomal protein uS12]-hydrogen + (sulfur carrier)-SH + AH2 + 2 S-adenosyl-L-methionine = 3-methylsulfanyl-L-aspartate(89)-[ribosomal protein uS12]-hydrogen + (sulfur carrier)-H + 5'-deoxyadenosine + L-methionine + A + S-adenosyl-L-homocysteine + 2 H(+). Functionally, catalyzes the methylthiolation of an aspartic acid residue of ribosomal protein uS12. The chain is Ribosomal protein uS12 methylthiotransferase RimO from Alteromonas mediterranea (strain DSM 17117 / CIP 110805 / LMG 28347 / Deep ecotype).